Reading from the N-terminus, the 350-residue chain is Twinfilin-1 (350 aa).

Ser-2 carries the N-acetylserine modification. Residues 2–139 (SHQTGIQASE…SLHGYKKYLL (138 aa)) form the ADF-H 1 domain. Residues Ser-143 and Ser-277 each carry the phosphoserine modification. The region spanning 177–313 (GVAFPISQEA…TADFLYEEVH (137 aa)) is the ADF-H 2 domain. Tyr-309 bears the Phosphotyrosine mark. The disordered stretch occupies residues 316–350 (QHAHKQSFAKPKGPSGKRGIRRIIRGPAETEATTE). Thr-349 carries the phosphothreonine modification.

It belongs to the actin-binding proteins ADF family. Twinfilin subfamily. In terms of assembly, interacts with G-actin; ADP-actin form and capping protein (CP). May also be able to interact with TWF2 and phosphoinositides, PI(4,5)P2. When bound to PI(4,5)P2, it is down-regulated. Interacts with ACTG1. Post-translationally, phosphorylated on serine and threonine residues.

It localises to the cytoplasm. It is found in the cytoskeleton. Actin-binding protein involved in motile and morphological processes. Inhibits actin polymerization, likely by sequestering G-actin. By capping the barbed ends of filaments, it also regulates motility. Seems to play an important role in clathrin-mediated endocytosis and distribution of endocytic organelles. This chain is Twinfilin-1 (TWF1), found in Bos taurus (Bovine).